The primary structure comprises 212 residues: Orotate phosphoribosyltransferase (212 aa).

5-phospho-alpha-D-ribose 1-diphosphate contacts are provided by residues R94, K98, H100, and 120 to 128 (EDLISTGGS). S124 lines the orotate pocket.

Belongs to the purine/pyrimidine phosphoribosyltransferase family. PyrE subfamily. Homodimer. Mg(2+) serves as cofactor.

The catalysed reaction is orotidine 5'-phosphate + diphosphate = orotate + 5-phospho-alpha-D-ribose 1-diphosphate. Its pathway is pyrimidine metabolism; UMP biosynthesis via de novo pathway; UMP from orotate: step 1/2. In terms of biological role, catalyzes the transfer of a ribosyl phosphate group from 5-phosphoribose 1-diphosphate to orotate, leading to the formation of orotidine monophosphate (OMP). The polypeptide is Orotate phosphoribosyltransferase (Bacillus pumilus (strain SAFR-032)).